Here is a 393-residue protein sequence, read N- to C-terminus: MAQENAAFSPGSEEPPRRRGRQRYVEKDGRCNVQQGNVRETYRYLTDLFTTLVDLQWRLSLLFFVLAYALTWLFFGAIWWLIAYGRGDLEHLEDTAWTPCVNNLNGFVAAFLFSIETETTIGYGHRVITDQCPEGIVLLLLQAILGSMVNAFMVGCMFVKISQPNKRAATLVFSSHAVVSLRDGRLCLMFRVGDLRSSHIVEASIRAKLIRSRQTLEGEFIPLHQTDLSVGFDTGDDRLFLVSPLVISHEIDAASPFWEASRRALERDDFEIVVILEGMVEATGMTCQARSSYLVDEVLWGHRFTSVLTLEDGFYEVDYASFHETFEVPTPSCSARELAEAAARLDAHLYWSIPSRLDEKVEEEGAGEGAGAGDGADKEQNGCLPPPESESKV.

A disordered region spans residues 1 to 23; it reads MAQENAAFSPGSEEPPRRRGRQR. At 1-57 the chain is on the cytoplasmic side; the sequence is MAQENAAFSPGSEEPPRRRGRQRYVEKDGRCNVQQGNVRETYRYLTDLFTTLVDLQW. The helical transmembrane segment at 58-82 threads the bilayer; the sequence is RLSLLFFVLAYALTWLFFGAIWWLI. Topologically, residues 83-106 are extracellular; it reads AYGRGDLEHLEDTAWTPCVNNLNG. The helical; Pore-forming intramembrane region spans 107-118; that stretch reads FVAAFLFSIETE. An intramembrane region (pore-forming) is located at residues 119–125; it reads TTIGYGH. The short motif at 120 to 125 is the Selectivity filter element; sequence TIGYGH. Residues 126-134 lie on the Extracellular side of the membrane; that stretch reads RVITDQCPE. A helical transmembrane segment spans residues 135 to 156; sequence GIVLLLLQAILGSMVNAFMVGC. At 157 to 393 the chain is on the cytoplasmic side; it reads MFVKISQPNK…LPPPESESKV (237 aa). The disordered stretch occupies residues 360 to 393; that stretch reads KVEEEGAGEGAGAGDGADKEQNGCLPPPESESKV. A compositionally biased stretch (pro residues) spans 384–393; that stretch reads LPPPESESKV. The PDZ-binding motif lies at 390–393; it reads ESKV.

This sequence belongs to the inward rectifier-type potassium channel (TC 1.A.2.1) family. KCNJ9 subfamily. Associates with KCNJ3/GIRK1 to form a G-protein-activated heteromultimer pore-forming unit. Interacts (via PDZ-binding motif) with SNX27 (via PDZ domain); the interaction is required when endocytosed to prevent degradation in lysosomes and promote recycling to the plasma membrane.

The protein resides in the membrane. The catalysed reaction is K(+)(in) = K(+)(out). This receptor is controlled by G proteins. Inward rectifier potassium channels are characterized by a greater tendency to allow potassium to flow into the cell rather than out of it. Their voltage dependence is regulated by the concentration of extracellular potassium; as external potassium is raised, the voltage range of the channel opening shifts to more positive voltages. The inward rectification is mainly due to the blockage of outward current by internal magnesium. Unable to produce channel activity when expressed alone but forms a functional channel in association with KCNJ3/GIRK1. The protein is G protein-activated inward rectifier potassium channel 3 (Kcnj9) of Rattus norvegicus (Rat).